The sequence spans 83 residues: Aminoacyl carrier protein (83 aa).

The Carrier domain maps to Met-1–Lys-80. Position 35 is an O-(pantetheine 4'-phosphoryl)serine (Ser-35).

4'-phosphopantetheine is transferred from CoA to a specific serine of the apo-form of this carrier protein.

Functionally, aminoacyl carrier protein. Can be charged with L-alanine, L-glycine or L-serine, via the formation of a thioester bond between the amino acid and the 4'-phosphopantetheinyl prosthetic group, catalyzed by the Atu2573 ligase. This chain is Aminoacyl carrier protein, found in Agrobacterium fabrum (strain C58 / ATCC 33970) (Agrobacterium tumefaciens (strain C58)).